A 212-amino-acid chain; its full sequence is Agamous-like MADS-box protein MADS9 (212 aa).

Positions 1–61 (MGRGKIEIKR…GKMHEYCSPS (61 aa)) constitute an MADS-box domain. Positions 84–170 (HENLNNELDR…NYIVHHQGMP (87 aa)) constitute a K-box domain.

As to expression, expressed during flower development in stamens and petals.

The protein localises to the nucleus. Its function is as follows. Probable transcription factor that may play role in specifying stamen and petal organ identity. The sequence is that of Agamous-like MADS-box protein MADS9 from Vitis vinifera (Grape).